The following is a 316-amino-acid chain: Methionyl-tRNA formyltransferase (316 aa).

Residue 112–115 (SLLP) participates in (6S)-5,6,7,8-tetrahydrofolate binding.

Belongs to the Fmt family.

The catalysed reaction is L-methionyl-tRNA(fMet) + (6R)-10-formyltetrahydrofolate = N-formyl-L-methionyl-tRNA(fMet) + (6S)-5,6,7,8-tetrahydrofolate + H(+). Its function is as follows. Attaches a formyl group to the free amino group of methionyl-tRNA(fMet). The formyl group appears to play a dual role in the initiator identity of N-formylmethionyl-tRNA by promoting its recognition by IF2 and preventing the misappropriation of this tRNA by the elongation apparatus. This chain is Methionyl-tRNA formyltransferase, found in Trichlorobacter lovleyi (strain ATCC BAA-1151 / DSM 17278 / SZ) (Geobacter lovleyi).